We begin with the raw amino-acid sequence, 201 residues long: Esterase TesA (201 aa).

The N-terminal stretch at 1–21 (MRALLLSGCLALVLLTQQAAA) is a signal peptide. The Nucleophile role is filled by serine 30. Residues aspartate 177 and histidine 180 contribute to the active site.

It belongs to the 'GDSL' lipolytic enzyme family.

It is found in the secreted. The catalysed reaction is a carboxylic ester + H2O = an alcohol + a carboxylate + H(+). Its function is as follows. Esterase that exhibits the highest activity towards Tween detergents and p-nitrophenyl esters of short acyl chain length. Also displays a low thioesterase activity towards palmitoyl-coenzyme A, but is not active towards acetyl-coenzyme A. The chain is Esterase TesA (tesA) from Pseudomonas aeruginosa (strain ATCC 15692 / DSM 22644 / CIP 104116 / JCM 14847 / LMG 12228 / 1C / PRS 101 / PAO1).